The primary structure comprises 403 residues: Probable tRNA sulfurtransferase (403 aa).

The THUMP domain maps to 60–165 (QLVEERLKPI…KEGVFLSCRT (106 aa)). ATP is bound by residues 183–184 (ML), 208–209 (HF), Arg-265, Gly-287, and Gln-296.

This sequence belongs to the ThiI family.

The protein localises to the cytoplasm. The enzyme catalyses [ThiI sulfur-carrier protein]-S-sulfanyl-L-cysteine + a uridine in tRNA + 2 reduced [2Fe-2S]-[ferredoxin] + ATP + H(+) = [ThiI sulfur-carrier protein]-L-cysteine + a 4-thiouridine in tRNA + 2 oxidized [2Fe-2S]-[ferredoxin] + AMP + diphosphate. It carries out the reaction [ThiS sulfur-carrier protein]-C-terminal Gly-Gly-AMP + S-sulfanyl-L-cysteinyl-[cysteine desulfurase] + AH2 = [ThiS sulfur-carrier protein]-C-terminal-Gly-aminoethanethioate + L-cysteinyl-[cysteine desulfurase] + A + AMP + 2 H(+). It participates in cofactor biosynthesis; thiamine diphosphate biosynthesis. Its function is as follows. Catalyzes the ATP-dependent transfer of a sulfur to tRNA to produce 4-thiouridine in position 8 of tRNAs, which functions as a near-UV photosensor. Also catalyzes the transfer of sulfur to the sulfur carrier protein ThiS, forming ThiS-thiocarboxylate. This is a step in the synthesis of thiazole, in the thiamine biosynthesis pathway. The sulfur is donated as persulfide by IscS. The chain is Probable tRNA sulfurtransferase from Listeria monocytogenes serotype 4b (strain CLIP80459).